The primary structure comprises 185 residues: Photosystem I assembly protein Ycf4 (185 aa).

A run of 2 helical transmembrane segments spans residues 21 to 43 (NFFW…ISSY) and 63 to 85 (GVVM…CTIL).

It belongs to the Ycf4 family.

Its subcellular location is the plastid. It is found in the chloroplast thylakoid membrane. Functionally, seems to be required for the assembly of the photosystem I complex. This chain is Photosystem I assembly protein Ycf4, found in Aegilops crassa (Persian goatgrass).